The chain runs to 796 residues: Volume-regulated anion channel subunit LRRC8E (796 aa).

Residues 1-22 (MIPVAEFKQFTEQQPAFKVLKP) lie on the Cytoplasmic side of the membrane. Residues 23–43 (WWDVLAEYLTVAMLMIGVFGC) form a helical membrane-spanning segment. At 44 to 116 (TLQVTQDKII…YETALHWYAK (73 aa)) the chain is on the extracellular side. The cysteines at positions 54 and 301 are disulfide-linked. N-linked (GlcNAc...) asparagine glycosylation occurs at Asn-63. A helical membrane pass occupies residues 117 to 137 (YFPYLVVIHTLIFMVCTSFWF). Topologically, residues 138 to 265 (KFPGTSSKIE…IRQTVLKVCK (128 aa)) are cytoplasmic. Residues 266–286 (FLAILVYNLVYVEKISFLVAC) form a helical membrane-spanning segment. At 287–313 (RVETSEVTGYASFCCNHTKAHLFSKLA) the chain is on the extracellular side. N-linked (GlcNAc...) asparagine glycosylation occurs at Asn-302. Residues 314-334 (FCYISFVCIYGLTCIYTLYWL) traverse the membrane as a helical segment. Topologically, residues 335-796 (FHRPLKEYSF…AEVRDKMEEE (462 aa)) are cytoplasmic. 11 LRR repeats span residues 508–529 (GLEELHLEGLFPQELARAATLE), 536–557 (QLKVLSLRSNAGKVPASVTDVA), 559–579 (HLQRLSLHNDGARLVALNSLK), 583–604 (ALRELELVACGLERIPHAVFSL), 606–627 (ALQELDLKDNHLRSIEEILSFQ), 631–652 (KLVTLRLWHNQIAYVPEHVRKL), 654–675 (SLEQLYLSYNKLETLPSQLGLC), 677–698 (GLRLLDVSHNGLHSLPPEVGLL), 700–721 (NLQHLALSYNALEALPEELFFC), 723–744 (KLRTLLLGDNQLSQLSPHVGAL), and 746–767 (ALSRLELKGNRLEALPEELGNC).

It belongs to the LRRC8 family. Heterohexamer; oligomerizes with other LRRC8 proteins (LRRC8A, LRRC8C, LRRC8D and/or LRRC8B) to form a heterohexamer. In vivo, the subunit composition may depend primarily on expression levels, and heterooligomeric channels containing various proportions of the different LRRC8 proteins may coexist.

Its subcellular location is the cell membrane. The protein resides in the endoplasmic reticulum membrane. The protein localises to the lysosome membrane. It catalyses the reaction chloride(in) = chloride(out). It carries out the reaction iodide(out) = iodide(in). The enzyme catalyses taurine(out) = taurine(in). The catalysed reaction is 2',3'-cGAMP(out) = 2',3'-cGAMP(in). Non-essential component of the volume-regulated anion channel (VRAC, also named VSOAC channel), an anion channel required to maintain a constant cell volume in response to extracellular or intracellular osmotic changes. The VRAC channel conducts iodide better than chloride and can also conduct organic osmolytes like taurine. Mediates efflux of amino acids, such as aspartate, in response to osmotic stress. The VRAC channel also mediates transport of immunoreactive cyclic dinucleotide GMP-AMP (2'-3'-cGAMP), an immune messenger produced in response to DNA virus in the cytosol. Channel activity requires LRRC8A plus at least one other family member (LRRC8B, LRRC8C, LRRC8D or LRRC8E); channel characteristics depend on the precise subunit composition. Also plays a role in lysosome homeostasis by forming functional lysosomal VRAC channels in response to low cytoplasmic ionic strength condition: lysosomal VRAC channels are necessary for the formation of large lysosome-derived vacuoles, which store and then expel excess water to maintain cytosolic water homeostasis. This Homo sapiens (Human) protein is Volume-regulated anion channel subunit LRRC8E.